Consider the following 379-residue polypeptide: 1-deoxy-D-xylulose 5-phosphate reductoisomerase (379 aa).

Residues threonine 10, glycine 11, serine 12, isoleucine 13, glycine 36, asparagine 38, and asparagine 121 each coordinate NADPH. Lysine 122 contributes to the 1-deoxy-D-xylulose 5-phosphate binding site. Glutamate 123 contacts NADPH. Residue aspartate 147 participates in Mn(2+) binding. Serine 148, glutamate 149, serine 173, and histidine 196 together coordinate 1-deoxy-D-xylulose 5-phosphate. Residue glutamate 149 coordinates Mn(2+). Residue glycine 202 coordinates NADPH. 1-deoxy-D-xylulose 5-phosphate contacts are provided by serine 209, asparagine 214, lysine 215, and glutamate 218. Glutamate 218 contacts Mn(2+).

Belongs to the DXR family. It depends on Mg(2+) as a cofactor. The cofactor is Mn(2+).

The catalysed reaction is 2-C-methyl-D-erythritol 4-phosphate + NADP(+) = 1-deoxy-D-xylulose 5-phosphate + NADPH + H(+). Its pathway is isoprenoid biosynthesis; isopentenyl diphosphate biosynthesis via DXP pathway; isopentenyl diphosphate from 1-deoxy-D-xylulose 5-phosphate: step 1/6. Its function is as follows. Catalyzes the NADPH-dependent rearrangement and reduction of 1-deoxy-D-xylulose-5-phosphate (DXP) to 2-C-methyl-D-erythritol 4-phosphate (MEP). This chain is 1-deoxy-D-xylulose 5-phosphate reductoisomerase, found in Shouchella clausii (strain KSM-K16) (Alkalihalobacillus clausii).